A 740-amino-acid polypeptide reads, in one-letter code: DNA ligase (740 aa).

The segment at 1-20 (MGPGLTLSGMTEQSSLFPAP) is disordered. Residues 56-60 (DAEYD), 105-106 (SI), and glutamate 142 each bind NAD(+). Catalysis depends on lysine 144, which acts as the N6-AMP-lysine intermediate. Residues arginine 165, glutamate 201, lysine 322, and lysine 346 each coordinate NAD(+). Zn(2+) is bound by residues cysteine 471, cysteine 474, cysteine 489, and cysteine 495. The 87-residue stretch at 654-740 (AATLPLAGMT…RGAPPNAGGG (87 aa)) folds into the BRCT domain.

The protein belongs to the NAD-dependent DNA ligase family. LigA subfamily. It depends on Mg(2+) as a cofactor. Mn(2+) serves as cofactor.

The catalysed reaction is NAD(+) + (deoxyribonucleotide)n-3'-hydroxyl + 5'-phospho-(deoxyribonucleotide)m = (deoxyribonucleotide)n+m + AMP + beta-nicotinamide D-nucleotide.. Functionally, DNA ligase that catalyzes the formation of phosphodiester linkages between 5'-phosphoryl and 3'-hydroxyl groups in double-stranded DNA using NAD as a coenzyme and as the energy source for the reaction. It is essential for DNA replication and repair of damaged DNA. This chain is DNA ligase, found in Acidovorax ebreus (strain TPSY) (Diaphorobacter sp. (strain TPSY)).